The sequence spans 475 residues: Ribulose bisphosphate carboxylase large chain (475 aa).

Asparagine 123 and threonine 173 together coordinate substrate. Lysine 175 functions as the Proton acceptor in the catalytic mechanism. Position 177 (lysine 177) interacts with substrate. Mg(2+) is bound by residues lysine 201, aspartate 203, and glutamate 204. Lysine 201 is modified (N6-carboxylysine). Histidine 294 (proton acceptor) is an active-site residue. Substrate is bound by residues arginine 295, histidine 327, and serine 379.

The protein belongs to the RuBisCO large chain family. Type I subfamily. As to quaternary structure, heterohexadecamer of 8 large chains and 8 small chains; disulfide-linked. The disulfide link is formed within the large subunit homodimers. Mg(2+) serves as cofactor. Post-translationally, the disulfide bond which can form in the large chain dimeric partners within the hexadecamer appears to be associated with oxidative stress and protein turnover.

It localises to the plastid. It is found in the chloroplast. The catalysed reaction is 2 (2R)-3-phosphoglycerate + 2 H(+) = D-ribulose 1,5-bisphosphate + CO2 + H2O. It catalyses the reaction D-ribulose 1,5-bisphosphate + O2 = 2-phosphoglycolate + (2R)-3-phosphoglycerate + 2 H(+). Its function is as follows. RuBisCO catalyzes two reactions: the carboxylation of D-ribulose 1,5-bisphosphate, the primary event in carbon dioxide fixation, as well as the oxidative fragmentation of the pentose substrate in the photorespiration process. Both reactions occur simultaneously and in competition at the same active site. The sequence is that of Ribulose bisphosphate carboxylase large chain from Euglena gracilis.